The following is a 197-amino-acid chain: Segregation and condensation protein B (197 aa).

The protein belongs to the ScpB family. Homodimer. Homodimerization may be required to stabilize the binding of ScpA to the Smc head domains. Component of a cohesin-like complex composed of ScpA, ScpB and the Smc homodimer, in which ScpA and ScpB bind to the head domain of Smc. The presence of the three proteins is required for the association of the complex with DNA.

Its subcellular location is the cytoplasm. In terms of biological role, participates in chromosomal partition during cell division. May act via the formation of a condensin-like complex containing Smc and ScpA that pull DNA away from mid-cell into both cell halves. The polypeptide is Segregation and condensation protein B (Syntrophotalea carbinolica (strain DSM 2380 / NBRC 103641 / GraBd1) (Pelobacter carbinolicus)).